A 100-amino-acid chain; its full sequence is Urease subunit gamma (100 aa).

This sequence belongs to the urease gamma subunit family. In terms of assembly, heterotrimer of UreA (gamma), UreB (beta) and UreC (alpha) subunits. Three heterotrimers associate to form the active enzyme.

The protein resides in the cytoplasm. The catalysed reaction is urea + 2 H2O + H(+) = hydrogencarbonate + 2 NH4(+). It participates in nitrogen metabolism; urea degradation; CO(2) and NH(3) from urea (urease route): step 1/1. In Ectopseudomonas mendocina (strain ymp) (Pseudomonas mendocina), this protein is Urease subunit gamma.